Reading from the N-terminus, the 472-residue chain is MAGQTLYDKLWNAHEVTKRDDGSSLIYIDRHLLHEVTSPQAFEGLELANRAPWRLSANIASPDHNVPTVTKERSEGVAGIKDKVSRLQVLTLDDNCAKFDIAEFTINDARQGILHVVGPEQGLVLPGMTVVCGDSHTATHGALGCLAHGIGTSEVEHVLATQCLIQKKSKNMQIRVTGELGAGVTSKDVVLAIIAKIGTAGGTGHAIEFAGQVFEDMSMEGRMTVCNMAIEAGARVGMVAVDDTTIDYVKGRPYAPNESQWQQAEAYWRTFYSDDDAVFDSVIEIDGSQIAPQVSWGTSPEMVVDITQSVPTPDQAIDEAQEEGWLRAYTYMGLEAGQKITDIQLDRIFIGSCTNSRIEDLRDAAAVIKGRKVADTIKEAIVVAGSGQVKLQAEAEGLDALFTDAGFEWREPGCSMCLAMNADKLEPQEHCASTSNRNFEGRQGNGGRTHLVSPAMAAAAALAGHFVDVRTF.

Cys353, Cys414, and Cys417 together coordinate [4Fe-4S] cluster.

The protein belongs to the aconitase/IPM isomerase family. LeuC type 1 subfamily. Heterodimer of LeuC and LeuD. [4Fe-4S] cluster serves as cofactor.

It carries out the reaction (2R,3S)-3-isopropylmalate = (2S)-2-isopropylmalate. The protein operates within amino-acid biosynthesis; L-leucine biosynthesis; L-leucine from 3-methyl-2-oxobutanoate: step 2/4. Functionally, catalyzes the isomerization between 2-isopropylmalate and 3-isopropylmalate, via the formation of 2-isopropylmaleate. This Psychrobacter cryohalolentis (strain ATCC BAA-1226 / DSM 17306 / VKM B-2378 / K5) protein is 3-isopropylmalate dehydratase large subunit.